A 408-amino-acid chain; its full sequence is Serine/threonine transporter SstT (408 aa).

The next 9 helical transmembrane spans lie at 19-39, 48-68, 86-106, 143-163, 193-213, 223-243, 294-314, 322-342, and 367-387; these read SLVS…VISP, LGSL…LVLV, IVGL…LLSF, VTAV…GLGF, FAPL…GFSA, VLLS…VFII, IPLG…VLTL, IEVS…SACG, and VAMQ…SAET.

Belongs to the dicarboxylate/amino acid:cation symporter (DAACS) (TC 2.A.23) family.

It localises to the cell inner membrane. It carries out the reaction L-serine(in) + Na(+)(in) = L-serine(out) + Na(+)(out). The enzyme catalyses L-threonine(in) + Na(+)(in) = L-threonine(out) + Na(+)(out). Its function is as follows. Involved in the import of serine and threonine into the cell, with the concomitant import of sodium (symport system). This is Serine/threonine transporter SstT from Colwellia psychrerythraea (strain 34H / ATCC BAA-681) (Vibrio psychroerythus).